A 453-amino-acid chain; its full sequence is Alpha-2B adrenergic receptor (453 aa).

Residues 1–17 (MSGPAMVHQEPYSVQAT) lie on the Extracellular side of the membrane. A helical membrane pass occupies residues 18–42 (AAIASAITFLILFTIFGNALVILAV). At 43-54 (LTSRSLRAPQNL) the chain is on the cytoplasmic side. A helical transmembrane segment spans residues 55-80 (FLVSLAAADILVATLIIPFSLANELL). The Extracellular portion of the chain corresponds to 81–90 (GYWYFWRAWC). The cysteines at positions 90 and 169 are disulfide-linked. A helical transmembrane segment spans residues 91-113 (EVYLALDVLFCTSSIVHLCAISL). Residues 114 to 135 (DRYWAVSRALEYNSKRTPRRIK) lie on the Cytoplasmic side of the membrane. Residues 136–158 (CIILTVWLIAAVISLPPLIYKGD) traverse the membrane as a helical segment. The Extracellular segment spans residues 159-174 (QRPEPHGLPQCELNQE). A helical transmembrane segment spans residues 175–198 (AWYILASSIGSFFAPCLIMILVYL). Over 199 to 375 (RIYVIAKRSH…LSREKRFTFV (177 aa)) the chain is Cytoplasmic. Residues 214-329 (AKRGSGEGES…ASPASVFNPP (116 aa)) form a disordered region. Positions 303–314 (AEEDEEEVEECE) are enriched in acidic residues. A helical membrane pass occupies residues 376–399 (LAVVIGVFVVCWFPFFFSYSLGAI). Residues 400-408 (CPQHCKVPH) lie on the Extracellular side of the membrane. The chain crosses the membrane as a helical span at residues 409–432 (GLFQFFFWIGYCNSSLNPVIYTIF). Over 433–453 (NQDFRRAFRRILCRQWTQTGW) the chain is Cytoplasmic. Cysteine 445 is lipidated: S-palmitoyl cysteine.

It belongs to the G-protein coupled receptor 1 family. Adrenergic receptor subfamily. ADRA2B sub-subfamily. In terms of assembly, interacts with RAB26. Interacts with PPP1R9B. Interacts with GGA1, GGA2 and GGA3.

The protein resides in the cell membrane. In terms of biological role, alpha-2 adrenergic receptors mediate the catecholamine-induced inhibition of adenylate cyclase through the action of G proteins. This Mus musculus (Mouse) protein is Alpha-2B adrenergic receptor (Adra2b).